A 91-amino-acid polypeptide reads, in one-letter code: DNA-directed RNA polymerase subunit omega (91 aa).

The protein belongs to the RNA polymerase subunit omega family. In terms of assembly, the RNAP catalytic core consists of 2 alpha, 1 beta, 1 beta' and 1 omega subunit. When a sigma factor is associated with the core the holoenzyme is formed, which can initiate transcription.

The catalysed reaction is RNA(n) + a ribonucleoside 5'-triphosphate = RNA(n+1) + diphosphate. Promotes RNA polymerase assembly. Latches the N- and C-terminal regions of the beta' subunit thereby facilitating its interaction with the beta and alpha subunits. In Pseudoalteromonas translucida (strain TAC 125), this protein is DNA-directed RNA polymerase subunit omega.